We begin with the raw amino-acid sequence, 217 residues long: Probable GTP-binding protein EngB (217 aa).

Residues 29 to 213 enclose the EngB-type G domain; that stretch reads GPLEVAFAGR…RQAIAETVGI (185 aa). GTP-binding positions include 37–44, 64–68, 91–94, 158–161, and 192–194; these read GRSNVGKS, GRTQE, DMPG, TKTD, and TSS. The Mg(2+) site is built by serine 44 and threonine 66.

Belongs to the TRAFAC class TrmE-Era-EngA-EngB-Septin-like GTPase superfamily. EngB GTPase family. Requires Mg(2+) as cofactor.

In terms of biological role, necessary for normal cell division and for the maintenance of normal septation. The polypeptide is Probable GTP-binding protein EngB (Rhizobium johnstonii (strain DSM 114642 / LMG 32736 / 3841) (Rhizobium leguminosarum bv. viciae)).